A 241-amino-acid polypeptide reads, in one-letter code: Tetrahydromethanopterin S-methyltransferase subunit A (241 aa).

Topologically, residues 1-220 (MANKREPAPG…AKWQAGYYNG (220 aa)) are cytoplasmic. Histidine 85 serves as a coordination point for 5-hydroxybenzimidazolylcob(I)amide. The helical transmembrane segment at 221–241 (KIQGIATGLFLMLLIMGILMF) threads the bilayer.

It belongs to the MtrA family. As to quaternary structure, the complex is composed of 8 subunits; MtrA, MtrB, MtrC, MtrD, MtrE, MtrF, MtrG and MtrH. Requires 5-hydroxybenzimidazolylcob(I)amide as cofactor.

It is found in the cell membrane. It carries out the reaction 5-methyl-5,6,7,8-tetrahydromethanopterin + coenzyme M + 2 Na(+)(in) = 5,6,7,8-tetrahydromethanopterin + methyl-coenzyme M + 2 Na(+)(out). Its pathway is one-carbon metabolism; methanogenesis from CO(2); methyl-coenzyme M from 5,10-methylene-5,6,7,8-tetrahydromethanopterin: step 2/2. Functionally, part of a complex that catalyzes the formation of methyl-coenzyme M and tetrahydromethanopterin from coenzyme M and methyl-tetrahydromethanopterin. This is an energy-conserving, sodium-ion translocating step. This Methanocaldococcus jannaschii (strain ATCC 43067 / DSM 2661 / JAL-1 / JCM 10045 / NBRC 100440) (Methanococcus jannaschii) protein is Tetrahydromethanopterin S-methyltransferase subunit A.